The primary structure comprises 666 residues: Nuclear distribution protein nudE homolog 1 (666 aa).

Residues 14–195 adopt a coiled-coil conformation; the sequence is EEEIAHYREK…KDQLARAIAT (182 aa). 4 disordered regions span residues 40–64, 220–310, 369–388, and 397–666; these read EFQQ…KQQA, DDIN…SGIP, KRVT…PAPH, and DHNT…KVKK. The span at 251–274 shows a compositional bias: polar residues; sequence RSGTMSSIPVASPSTKRFSQQIPH. Composition is skewed to low complexity over residues 275–287 and 372–383; these read SPSF…STTS and TSTTSTTSSTTT. Residues 400–410 show a composition bias toward polar residues; sequence TTPTAQSQQFP. Composition is skewed to low complexity over residues 449–465, 473–485, and 536–554; these read PTFR…LPSR, ASGS…SGTA, and SATP…STSN. Composition is skewed to polar residues over residues 587–599 and 614–638; these read RQSL…TPTT and SSLS…SGRP.

The protein belongs to the nudE family. In terms of assembly, self-associates. Interacts with PAC1.

It localises to the cytoplasm. Its subcellular location is the cytoskeleton. Functionally, required for nuclear migration. This chain is Nuclear distribution protein nudE homolog 1 (NDE1), found in Cryptococcus neoformans var. neoformans serotype D (strain B-3501A) (Filobasidiella neoformans).